The chain runs to 38 residues: MKVRASLKKRTPECKIVRRNGRLYVINKKNPKYKQRQG.

Belongs to the bacterial ribosomal protein bL36 family.

The sequence is that of Large ribosomal subunit protein bL36 from Bacteroides fragilis (strain ATCC 25285 / DSM 2151 / CCUG 4856 / JCM 11019 / LMG 10263 / NCTC 9343 / Onslow / VPI 2553 / EN-2).